The primary structure comprises 775 residues: Ribonucleoside-diphosphate reductase large subunit (775 aa).

Substrate contacts are provided by residues T200, 215 to 216 (SC), G246, 427 to 431 (NLCTE), and 606 to 610 (PTVSS). A disulfide bridge connects residues C216 and C444. The Proton acceptor role is filled by N427. The active-site Cysteine radical intermediate is C429. The active-site Proton acceptor is E431.

Belongs to the ribonucleoside diphosphate reductase large chain family. As to quaternary structure, heterotetramer composed of a homodimer of the large subunit (R1) and a homodimer of the small subunit (R2). Larger multisubunit protein complex are also active, composed of (R1)n(R2)n.

The catalysed reaction is a 2'-deoxyribonucleoside 5'-diphosphate + [thioredoxin]-disulfide + H2O = a ribonucleoside 5'-diphosphate + [thioredoxin]-dithiol. Its function is as follows. Ribonucleoside-diphosphate reductase holoenzyme provides the precursors necessary for viral DNA synthesis. Allows virus growth in non-dividing cells, as well as reactivation from latency in infected hosts. Catalyzes the biosynthesis of deoxyribonucleotides from the corresponding ribonucleotides. This chain is Ribonucleoside-diphosphate reductase large subunit, found in Homo sapiens (Human).